A 340-amino-acid chain; its full sequence is Ava biosynthesis cluster protein G (340 aa).

A run of 4 helical transmembrane segments spans residues 15–35 (WSAF…NIWN), 81–101 (FMIS…LQFV), 118–138 (AFFV…VHAF), and 148–168 (LSIM…FLCI). N-linked (GlcNAc...) asparagine glycosylation occurs at asparagine 171. A run of 2 helical transmembrane segments spans residues 219 to 239 (FSSV…YVAF) and 315 to 335 (SALT…WLQI).

The protein localises to the membrane. It participates in secondary metabolite biosynthesis. In terms of biological role, part of the cluster that mediates the biosynthesis of a highly modified cyclo-arginine-tryptophan dipeptide (cRW). The first step of the pathway is perfornmed by the arginine-containing cyclodipeptide synthase (RCPDS) avaA that acts as the scaffold-generating enzyme and is responsible for formation of the cyclo-Arg-Trp (cRW) diketopiperazine. AvaB then acts as a multifunctional flavoenzyme that is responsible for generating the cyclo-Arg-formylkynurenine DKP, which can be deformylated by avaC. AvaB then further catalyzes an additional N-oxidation followed by cyclization and dehydration. The next step is an N-acetylation of the guanidine group catalyzed by the arginine N-acetyltransferase avaD. The roles of the additional enzymes identified within the ava cluster still have to be determined. In Aspergillus versicolor, this protein is Ava biosynthesis cluster protein G.